The sequence spans 440 residues: Ribosomal protein uS12 methylthiotransferase RimO (440 aa).

The MTTase N-terminal domain maps to 6–116 (PKVGFVSLGC…VVSAVHEVVP (111 aa)). Positions 15, 51, 80, 149, 153, and 156 each coordinate [4Fe-4S] cluster. In terms of domain architecture, Radical SAM core spans 135-374 (LTPRHYAYLK…AHQQAISSAR (240 aa)). Positions 376–440 (QAKIGLEMDV…DEYDMWGELV (65 aa)) constitute a TRAM domain.

It belongs to the methylthiotransferase family. RimO subfamily. [4Fe-4S] cluster serves as cofactor.

It is found in the cytoplasm. It carries out the reaction L-aspartate(89)-[ribosomal protein uS12]-hydrogen + (sulfur carrier)-SH + AH2 + 2 S-adenosyl-L-methionine = 3-methylsulfanyl-L-aspartate(89)-[ribosomal protein uS12]-hydrogen + (sulfur carrier)-H + 5'-deoxyadenosine + L-methionine + A + S-adenosyl-L-homocysteine + 2 H(+). Functionally, catalyzes the methylthiolation of an aspartic acid residue of ribosomal protein uS12. The sequence is that of Ribosomal protein uS12 methylthiotransferase RimO from Ectopseudomonas mendocina (strain ymp) (Pseudomonas mendocina).